Here is a 224-residue protein sequence, read N- to C-terminus: MNQEEHVKLLGLWGSPFSKRVEMVLKLKGIPYEYIEEDVYGNRSPMLLKYNPIHKKVPVLIHNGRSIAESLVIVEYIEDTWKTTHTILPQDPYERAMARFWAKYVDEKVMLAVKKACWGPESEREKEVKEAYEGLKCLEKELGDKLFFGGETIGFVDIAADFIGYWLGIFQEASGVTIMTAEEFPKLQRWSEDFVGNNFIKEVLPPKEKLVAVLKAMFGSVTSN.

One can recognise a GST N-terminal domain in the interval 5 to 85; that stretch reads EHVKLLGLWG…YIEDTWKTTH (81 aa). Glutathione is bound by residues 15–16, 42–43, 56–57, and 69–70; these read SP, NR, KV, and ES. The GST C-terminal domain maps to 91-213; sequence DPYERAMARF…LPPKEKLVAV (123 aa). Threonine 152 carries the phosphothreonine modification.

This sequence belongs to the GST superfamily. Tau family.

The protein resides in the cytoplasm. It localises to the cytosol. The enzyme catalyses RX + glutathione = an S-substituted glutathione + a halide anion + H(+). Functionally, may be involved in the conjugation of reduced glutathione to a wide number of exogenous and endogenous hydrophobic electrophiles and have a detoxification role against certain herbicides. The polypeptide is Glutathione S-transferase U8 (GSTU8) (Arabidopsis thaliana (Mouse-ear cress)).